We begin with the raw amino-acid sequence, 262 residues long: 14-3-3-like protein A (262 aa).

The tract at residues 240–262 (DNAEEGGDEIKEAASKPEGEGHS) is disordered. Residues 247-262 (DEIKEAASKPEGEGHS) show a composition bias toward basic and acidic residues.

It belongs to the 14-3-3 family.

The polypeptide is 14-3-3-like protein A (Hordeum vulgare (Barley)).